The sequence spans 404 residues: Plasma serine protease inhibitor (404 aa).

A signal peptide spans 1 to 19 (MRLCLFLCLVLLGPRMATL). Residues 20–24 (RRSQK) constitute a propeptide, removed in mature form. Residues Thr-35 and Thr-36 are each glycosylated (O-linked (GalNAc...) threonine). N-linked (GlcNAc...) asparagine glycosylation is found at Asn-245, Asn-258, and Asn-334.

Belongs to the serpin family. As to quaternary structure, forms protease inhibiting heterodimers in extracellular body fluids with serine proteases such as activated protein C/coagulation factor V/F5, acrosin/ACR, chymotrypsinogen B/CTRB1, prothrombin/F2, factor Xa/F10, factor XI/F11, kallikrein/KLKB1, tissue kallikrein, trypsin/PRSS1, prostate specific antigen/KLK3, tissue plasminogen activator/PLAT and urinary plasminogen activator/PLAU. Forms membrane-anchored serine proteases inhibiting heterodimers with TMPRSS7 and TMPRSS11E. Interacts with SEMG2. In terms of processing, N-glycosylated; glycans consist of a mixture of sialylated bi- (including sialyl-Lewis X epitopes), tri- and tetra-antennary complex-type chains; affects the maximal heparin- and thrombomodulin-enhanced rates of thrombin inhibition. O-glycosylated; further modified with 2 sialic acid residues. Proteolytically cleaved at the N-terminus; inhibits slightly the heparin- and thrombomodulin-enhanced rates of thrombin inhibition. N- and O-glycosylated. Post-translationally, proteolytically cleaved. Inhibition of proteases is accompanied by formation of a stable enzyme-inhibitor complex and by degradation of the serpin to lower molecular weight derivatives. As to expression, expressed strongly in the liver, and moderately in the kidney and testis, but not in other tissues tested.

Its subcellular location is the secreted. It localises to the extracellular space. Its activity is regulated as follows. Its inhibitory activity is greatly enhanced in the presence of glycosaminoglycans, heparin, thrombomodulin and phospholipids vesicles. In terms of biological role, heparin-dependent serine protease inhibitor acting in body fluids and secretions. Inactivates serine proteases by binding irreversibly to their serine activation site. Involved in the regulation of intravascular and extravascular proteolytic activities. Plays hemostatic roles in the blood plasma. Acts as a procoagulant and pro-inflammatory factor by inhibiting the anticoagulant activated protein C factor as well as the generation of activated protein C factor by the thrombin/thrombomodulin complex. Acts as an anticoagulant factor by inhibiting blood coagulation factors like prothrombin, factor XI, factor Xa, plasma kallikrein and fibrinolytic enzymes such as tissue- and urinary-type plasminogen activators. In seminal plasma, inactivates several serine proteases implicated in the reproductive system. Inhibits the serpin acrosin; indirectly protects component of the male genital tract from being degraded by excessive released acrosin. Inhibits tissue- and urinary-type plasminogen activator, prostate-specific antigen and kallikrein activities; has a control on the sperm motility and fertilization. Inhibits the activated protein C-catalyzed degradation of SEMG1 and SEMG2; regulates the degradation of semenogelin during the process of transfer of spermatozoa from the male reproductive tract into the female tract. In urine, inhibits urinary-type plasminogen activator and kallikrein activities. Inactivates membrane-anchored serine proteases activities such as MPRSS7 and TMPRSS11E. Inhibits urinary-type plasminogen activator-dependent tumor cell invasion and metastasis. May also play a non-inhibitory role in seminal plasma and urine as a hydrophobic hormone carrier by its binding to retinoic acid. The chain is Plasma serine protease inhibitor (SERPINA5) from Bos taurus (Bovine).